A 353-amino-acid chain; its full sequence is Photosystem II protein D1 (353 aa).

Residue Thr-2 is modified to N-acetylthreonine. Thr-2 bears the Phosphothreonine mark. The next 3 membrane-spanning stretches (helical) occupy residues 29–46 (YIGW…TATS), 118–133 (HFLL…EWEL), and 142–156 (WIAV…AATA). His-118 contacts chlorophyll a. Tyr-126 serves as a coordination point for pheophytin a. Positions 170 and 189 each coordinate [CaMn4O5] cluster. Residues 197–218 (FHMLGVAGVFGGSLFSAMHGSL) form a helical membrane-spanning segment. His-198 provides a ligand contact to chlorophyll a. A quinone is bound by residues His-215 and 264–265 (SF). His-215 is a binding site for Fe cation. Residue His-272 coordinates Fe cation. The helical transmembrane segment at 274 to 288 (FLAAWPVVGIWFTAL) threads the bilayer. [CaMn4O5] cluster contacts are provided by His-332, Glu-333, Asp-342, and Ala-344. Positions 345–353 (ALEVPSLNG) are excised as a propeptide.

It belongs to the reaction center PufL/M/PsbA/D family. PSII is composed of 1 copy each of membrane proteins PsbA, PsbB, PsbC, PsbD, PsbE, PsbF, PsbH, PsbI, PsbJ, PsbK, PsbL, PsbM, PsbT, PsbX, PsbY, PsbZ, Psb30/Ycf12, at least 3 peripheral proteins of the oxygen-evolving complex and a large number of cofactors. It forms dimeric complexes. The D1/D2 heterodimer binds P680, chlorophylls that are the primary electron donor of PSII, and subsequent electron acceptors. It shares a non-heme iron and each subunit binds pheophytin, quinone, additional chlorophylls, carotenoids and lipids. D1 provides most of the ligands for the Mn4-Ca-O5 cluster of the oxygen-evolving complex (OEC). There is also a Cl(-1) ion associated with D1 and D2, which is required for oxygen evolution. The PSII complex binds additional chlorophylls, carotenoids and specific lipids. is required as a cofactor. Tyr-161 forms a radical intermediate that is referred to as redox-active TyrZ, YZ or Y-Z. Post-translationally, C-terminally processed by CTPA; processing is essential to allow assembly of the oxygen-evolving complex and thus photosynthetic growth.

It is found in the plastid. It localises to the chloroplast thylakoid membrane. The catalysed reaction is 2 a plastoquinone + 4 hnu + 2 H2O = 2 a plastoquinol + O2. Its function is as follows. Photosystem II (PSII) is a light-driven water:plastoquinone oxidoreductase that uses light energy to abstract electrons from H(2)O, generating O(2) and a proton gradient subsequently used for ATP formation. It consists of a core antenna complex that captures photons, and an electron transfer chain that converts photonic excitation into a charge separation. The D1/D2 (PsbA/PsbD) reaction center heterodimer binds P680, the primary electron donor of PSII as well as several subsequent electron acceptors. This Lolium perenne (Perennial ryegrass) protein is Photosystem II protein D1.